Here is a 78-residue protein sequence, read N- to C-terminus: Large ribosomal subunit protein bL28 (78 aa).

Residues Met-1–His-20 form a disordered region.

This sequence belongs to the bacterial ribosomal protein bL28 family.

In Actinobacillus succinogenes (strain ATCC 55618 / DSM 22257 / CCUG 43843 / 130Z), this protein is Large ribosomal subunit protein bL28.